The primary structure comprises 258 residues: MLAIISPAKTLDFESAVKNFPVSQPHFTDYSEQLIEVCRKLSPQDLSSLMSISDKLAGLNAARFAEWTKIHNENNSRPALFAFKGDVYTGLDADSLSEDDVIFAQSHLRMLSGLYGLLKPLDLMQPYRLEMGTKLANPKGKDLYAFWGNVITQAVQQAIDAQGDNVLVNLASDEYYKSVKENQLNAKIIKPVFLDNKNGKYKVISFYAKKARGLMCRYLIQHRLTNIEQLKEFDLAGYWFDSASSTETEFVFKRDINE.

Belongs to the UPF0246 family.

This chain is UPF0246 protein CGSHiGG_08495, found in Haemophilus influenzae (strain PittGG).